The chain runs to 351 residues: Photosystem II D2 protein (351 aa).

Residues 39-59 form a helical membrane-spanning segment; sequence CAYLAVGGWLTGTTFVTSWYT. His-116 contributes to the chlorophyll a binding site. The helical transmembrane segment at 123–139 threads the bilayer; it reads GFCLRQFEIARLVGLRP. 2 residues coordinate pheophytin a: Gln-128 and Asn-141. The helical transmembrane segment at 151–164 threads the bilayer; the sequence is VFVSVFLMYPLGQA. His-196 provides a ligand contact to chlorophyll a. Residues 206–226 traverse the membrane as a helical segment; sequence GALLCAIHGATVQNTLFEDGD. The a plastoquinone site is built by His-213 and Phe-260. Position 213 (His-213) interacts with Fe cation. Position 267 (His-267) interacts with Fe cation. A helical transmembrane segment spans residues 277–293; that stretch reads GLWTSAFGIVGLALNLR.

Belongs to the reaction center PufL/M/PsbA/D family. In terms of assembly, PSII is composed of 1 copy each of membrane proteins PsbA, PsbB, PsbC, PsbD, PsbE, PsbF, PsbH, PsbI, PsbJ, PsbK, PsbL, PsbM, PsbT, PsbX, PsbY, PsbZ, Psb30/Ycf12, at least 3 peripheral proteins of the oxygen-evolving complex and a large number of cofactors. It forms dimeric complexes. The D1/D2 heterodimer binds P680, chlorophylls that are the primary electron donor of PSII, and subsequent electron acceptors. It shares a non-heme iron and each subunit binds pheophytin, quinone, additional chlorophylls, carotenoids and lipids. There is also a Cl(-1) ion associated with D1 and D2, which is required for oxygen evolution. The PSII complex binds additional chlorophylls, carotenoids and specific lipids. serves as cofactor.

The protein localises to the plastid. It is found in the chloroplast thylakoid membrane. It carries out the reaction 2 a plastoquinone + 4 hnu + 2 H2O = 2 a plastoquinol + O2. Functionally, photosystem II (PSII) is a light-driven water:plastoquinone oxidoreductase that uses light energy to abstract electrons from H(2)O, generating O(2) and a proton gradient subsequently used for ATP formation. It consists of a core antenna complex that captures photons, and an electron transfer chain that converts photonic excitation into a charge separation. The D1/D2 (PsbA/PsbD) reaction center heterodimer binds P680, the primary electron donor of PSII as well as several subsequent electron acceptors. D2 is needed for assembly of a stable PSII complex. This Porphyra purpurea (Red seaweed) protein is Photosystem II D2 protein.